A 187-amino-acid polypeptide reads, in one-letter code: tRNA (mnm(5)s(2)U34)-methyltransferase (187 aa).

Positions 31, 33, 51, 53, 77, and 78 each coordinate S-adenosyl-L-methionine.

Belongs to the methyltransferase superfamily. MnmM family. Homodimer.

It catalyses the reaction 5-aminomethyl-2-thiouridine(34) in tRNA + S-adenosyl-L-methionine = 5-methylaminomethyl-2-thiouridine(34) in tRNA + S-adenosyl-L-homocysteine + H(+). It participates in tRNA modification. Involved in the biosynthesis of 5-methylaminomethyl-2-thiouridine (mnm(5)s(2)U) at the wobble position (U34) in tRNA. Catalyzes the transfer of a methyl group from S-adenosyl-L-methionine to nm(5)s(2)U34 to form mnm(5)s(2)U34. This Staphylococcus aureus (strain NCTC 8325 / PS 47) protein is tRNA (mnm(5)s(2)U34)-methyltransferase.